The following is a 476-amino-acid chain: MKILHVCSELYPLLKTGGLADVLGALPQAQNQIGLDARFLLPAYPAITTGIPNTQVVAEFDNFAGHVVLRYGEYNGVGIYLIDAPHLYGREGNPYHDAYYNDYGDNYKRFALLGWVGAELATGLDSWWRAEVVHAHDWHAGLCVAYLFNKGKPAKSVFTIHNLAYQGQFSYHHLYEIGLPTGMFHVEGLELFGQISYLKSGLFYSDASTAVSPTYAQEITTPEFAYGLQGLLSGLKAQGRLVGILNGVDENIWHPNVDQYIPHHYKLKYMAGKKKNKAELQAYFNLPQDESALAFVMVTRLTEQKGVDLLIESADEIVKQGGQLMILGSGAPHLEQGIRELAERYPQNIAVKIGYDEALSHLMVAGGDVILVPSRFEPCGLTQLYGLQYGTLPLVRKTGGLADTVVDSTSESIKARTATGFVFESATPEALRHCLQRAFALWQKPRAWAMVRTDAMEQDFSWRKAAEQYRTLYERL.

Residue Lys-15 participates in ADP-alpha-D-glucose binding.

This sequence belongs to the glycosyltransferase 1 family. Bacterial/plant glycogen synthase subfamily.

It catalyses the reaction [(1-&gt;4)-alpha-D-glucosyl](n) + ADP-alpha-D-glucose = [(1-&gt;4)-alpha-D-glucosyl](n+1) + ADP + H(+). It participates in glycan biosynthesis; glycogen biosynthesis. Functionally, synthesizes alpha-1,4-glucan chains using ADP-glucose. This is Glycogen synthase (glgA) from Haemophilus influenzae (strain ATCC 51907 / DSM 11121 / KW20 / Rd).